Consider the following 247-residue polypeptide: Ribosomal RNA large subunit methyltransferase E (247 aa).

Residues G99, W101, D123, D139, and D162 each coordinate S-adenosyl-L-methionine. K202 acts as the Proton acceptor in catalysis.

This sequence belongs to the class I-like SAM-binding methyltransferase superfamily. RNA methyltransferase RlmE family.

The protein resides in the cytoplasm. The catalysed reaction is uridine(2552) in 23S rRNA + S-adenosyl-L-methionine = 2'-O-methyluridine(2552) in 23S rRNA + S-adenosyl-L-homocysteine + H(+). Specifically methylates the uridine in position 2552 of 23S rRNA at the 2'-O position of the ribose in the fully assembled 50S ribosomal subunit. The chain is Ribosomal RNA large subunit methyltransferase E from Anaplasma phagocytophilum (strain HZ).